The primary structure comprises 455 residues: MASKCLKASFSSGSLKVPGGAGGGSARVSTIFSSSSCKLSGLSRGPRSFSACSVGLGKSSCRAASCLPALCLPSGGFATSYGMAGGWFGEGILTGNEKETMQFLNDRLASYLEKVRQLERENAELESRIRDWCEQQVPYLCPDYQSYFQTIEELQKKILCTKSENARLVVQIDNAKLAADDFRTKYETEVTMRQLVESDMNGLRRILDDLTLCKADLEAQVESLKEELLCLKKNHEEEVNSLRCQLGDRLNVEVDAAPPVDLNRVLNEMRCQYETLVENNRREAEDWFNTQTEELNQQVVSSSEQLQSYQAEIIELRRTVNALEIELQAQHSMRDALESTLAETEARYSSQLAQMQGLIGNVESQLAEIRCDLERQNQEYQVLLDVRARLECEISTYRGLLDSEDCKLPCNPCAPDHSPSKSCLPCLPAASCGPGTAHTTCSPRPICVSCPGSRF.

The interval 1 to 97 (MASKCLKASF…FGEGILTGNE (97 aa)) is head. One can recognise an IF rod domain in the interval 97 to 408 (EKETMQFLND…GLLDSEDCKL (312 aa)). The coil 1A stretch occupies residues 98 to 132 (KETMQFLNDRLASYLEKVRQLERENAELESRIRDW). A linker 1 region spans residues 133-143 (CEQQVPYLCPD). Positions 144 to 244 (YQSYFQTIEE…HEEEVNSLRC (101 aa)) are coil 1B. The linker 12 stretch occupies residues 245–260 (QLGDRLNVEVDAAPPV). Residues 261-404 (DLNRVLNEMR…STYRGLLDSE (144 aa)) form a coil 2 region. The tract at residues 405-455 (DCKLPCNPCAPDHSPSKSCLPCLPAASCGPGTAHTTCSPRPICVSCPGSRF) is tail.

It belongs to the intermediate filament family.

The sequence is that of Keratin, type I cuticular Ha5 from Ovis aries (Sheep).